The chain runs to 343 residues: Aspartate-semialdehyde dehydrogenase (343 aa).

NADP(+)-binding positions include Thr13–Val16 and Lys41–Ser42. Arg103 serves as a coordination point for phosphate. Cys134 (acyl-thioester intermediate) is an active-site residue. Position 161 (Gln161) interacts with substrate. Residue Ser164–Gly165 participates in NADP(+) binding. Lys220 contributes to the phosphate binding site. Residue Arg241 participates in substrate binding. Catalysis depends on His248, which acts as the Proton acceptor. Gln321 contributes to the NADP(+) binding site.

It belongs to the aspartate-semialdehyde dehydrogenase family. As to quaternary structure, homodimer.

The enzyme catalyses L-aspartate 4-semialdehyde + phosphate + NADP(+) = 4-phospho-L-aspartate + NADPH + H(+). Its pathway is amino-acid biosynthesis; L-lysine biosynthesis via DAP pathway; (S)-tetrahydrodipicolinate from L-aspartate: step 2/4. The protein operates within amino-acid biosynthesis; L-methionine biosynthesis via de novo pathway; L-homoserine from L-aspartate: step 2/3. It functions in the pathway amino-acid biosynthesis; L-threonine biosynthesis; L-threonine from L-aspartate: step 2/5. Functionally, catalyzes the NADPH-dependent formation of L-aspartate-semialdehyde (L-ASA) by the reductive dephosphorylation of L-aspartyl-4-phosphate. This is Aspartate-semialdehyde dehydrogenase from Campylobacter jejuni subsp. jejuni serotype O:2 (strain ATCC 700819 / NCTC 11168).